We begin with the raw amino-acid sequence, 83 residues long: Small ribosomal subunit protein bS16 (83 aa).

The protein belongs to the bacterial ribosomal protein bS16 family.

In Finegoldia magna (strain ATCC 29328 / DSM 20472 / WAL 2508) (Peptostreptococcus magnus), this protein is Small ribosomal subunit protein bS16.